A 267-amino-acid polypeptide reads, in one-letter code: Phosphate import ATP-binding protein PstB 1 (267 aa).

The ABC transporter domain occupies 21 to 262; that stretch reads LETKDLHVYY…AALQSTSDYV (242 aa). ATP is bound at residue 53–60; the sequence is GPSGCGKS.

Belongs to the ABC transporter superfamily. Phosphate importer (TC 3.A.1.7) family. The complex is composed of two ATP-binding proteins (PstB), two transmembrane proteins (PstC and PstA) and a solute-binding protein (PstS).

It is found in the cell membrane. The catalysed reaction is phosphate(out) + ATP + H2O = ADP + 2 phosphate(in) + H(+). In terms of biological role, part of the ABC transporter complex PstSACB involved in phosphate import. Responsible for energy coupling to the transport system. The chain is Phosphate import ATP-binding protein PstB 1 from Streptococcus thermophilus (strain CNRZ 1066).